A 436-amino-acid chain; its full sequence is T-box transcription factor T (436 aa).

A DNA-binding region (T-box) is located at residues 51 to 219; sequence LWLRFKELTN…YNPFAKAFLD (169 aa).

In terms of assembly, monomer. Binds DNA as a monomer.

Its subcellular location is the nucleus. In terms of biological role, involved in the transcriptional regulation of genes required for mesoderm formation and differentiation. Binds to a palindromic T site 5'-TTCACACCTAGGTGTGAA-3' DNA sequence and activates gene transcription when bound to such a site. This is T-box transcription factor T from Mus musculus (Mouse).